A 102-amino-acid chain; its full sequence is UPF0058 protein MTH_224 (102 aa).

The protein belongs to the UPF0058 family.

This chain is UPF0058 protein MTH_224, found in Methanothermobacter thermautotrophicus (strain ATCC 29096 / DSM 1053 / JCM 10044 / NBRC 100330 / Delta H) (Methanobacterium thermoautotrophicum).